We begin with the raw amino-acid sequence, 145 residues long: Brain and acute leukemia cytoplasmic protein (145 aa).

G2 carries N-myristoyl glycine lipidation. Residue C3 is the site of S-palmitoyl cysteine attachment. The interval 3–35 (CGGSRADAIEPRYYESWTRETESTWLTYTDSDA) is interaction with CAMK2A. Residues 27-119 (WLTYTDSDAP…AKRDAKRMPA (93 aa)) form a disordered region. Residues 32–46 (DSDAPPSAAAPDSGP) show a composition bias toward low complexity. Over residues 83-108 (CETQCPNPQSLSSGPLTQKQNGLQTT) the composition is skewed to polar residues. Residues 109–119 (EAKRDAKRMPA) are compositionally biased toward basic and acidic residues.

Interacts with CAMK2A. Palmitoylation and myristoylation target the protein to the lipid rafts. In terms of tissue distribution, predominantly expressed in neuroectoderm-derived tissues. Expressed in the brain and spinal cord, and at low levels, in the adrenal gland. In the bone marrow, confined to the CD34+ progenitor cells. Not found in peripheral blood mononuclear cells, nor lymph nodes. Tends to be expressed at high levels in acute myeloid leukemia and glioblastoma cells.

The protein resides in the cytoplasm. Its subcellular location is the synapse. It is found in the synaptosome. The protein localises to the membrane raft. It localises to the postsynaptic density. In terms of biological role, may play a synaptic role at the postsynaptic lipid rafts possibly through interaction with CAMK2A. The protein is Brain and acute leukemia cytoplasmic protein of Homo sapiens (Human).